Here is a 189-residue protein sequence, read N- to C-terminus: ATP synthase subunit b (189 aa).

The helical transmembrane segment at 35–54 (LLAQMFNFLVLLILLRAVAY) threads the bilayer.

Belongs to the ATPase B chain family. F-type ATPases have 2 components, F(1) - the catalytic core - and F(0) - the membrane proton channel. F(1) has five subunits: alpha(3), beta(3), gamma(1), delta(1), epsilon(1). F(0) has three main subunits: a(1), b(2) and c(10-14). The alpha and beta chains form an alternating ring which encloses part of the gamma chain. F(1) is attached to F(0) by a central stalk formed by the gamma and epsilon chains, while a peripheral stalk is formed by the delta and b chains.

It is found in the cell membrane. Its function is as follows. F(1)F(0) ATP synthase produces ATP from ADP in the presence of a proton or sodium gradient. F-type ATPases consist of two structural domains, F(1) containing the extramembraneous catalytic core and F(0) containing the membrane proton channel, linked together by a central stalk and a peripheral stalk. During catalysis, ATP synthesis in the catalytic domain of F(1) is coupled via a rotary mechanism of the central stalk subunits to proton translocation. In terms of biological role, component of the F(0) channel, it forms part of the peripheral stalk, linking F(1) to F(0). This Desulforamulus reducens (strain ATCC BAA-1160 / DSM 100696 / MI-1) (Desulfotomaculum reducens) protein is ATP synthase subunit b.